We begin with the raw amino-acid sequence, 90 residues long: Acylphosphatase (90 aa).

The Acylphosphatase-like domain maps to 3–90 (RYSAIVQGRV…DGEKKFSIKY (88 aa)). Residues Arg-18 and Asn-36 contribute to the active site.

It belongs to the acylphosphatase family.

The catalysed reaction is an acyl phosphate + H2O = a carboxylate + phosphate + H(+). This Clostridium beijerinckii (strain ATCC 51743 / NCIMB 8052) (Clostridium acetobutylicum) protein is Acylphosphatase (acyP).